The following is a 156-amino-acid chain: 3-dehydroquinate dehydratase (156 aa).

Residue Tyr22 is the Proton acceptor of the active site. The substrate site is built by Asn73, His79, and Asp86. The active-site Proton donor is the His99. Residues 100–101 (LS) and Arg110 contribute to the substrate site.

This sequence belongs to the type-II 3-dehydroquinase family. As to quaternary structure, homododecamer.

The catalysed reaction is 3-dehydroquinate = 3-dehydroshikimate + H2O. The protein operates within metabolic intermediate biosynthesis; chorismate biosynthesis; chorismate from D-erythrose 4-phosphate and phosphoenolpyruvate: step 3/7. Functionally, catalyzes a trans-dehydration via an enolate intermediate. The sequence is that of 3-dehydroquinate dehydratase from Nitratiruptor sp. (strain SB155-2).